Here is a 350-residue protein sequence, read N- to C-terminus: Probable DNA polymerase III subunit delta (350 aa).

This sequence belongs to the DNA polymerase HolA subunit family. As to quaternary structure, component of the DNA clamp loading complex consisting of tau(3):delta(1):delta'(1). The DNA polymerase III holoenzyme complex contains at least 10 different subunits organized into 3 functionally essential subassemblies: the Pol III core, the beta sliding clamp processivity factor and the clamp-loading complex. The Pol III core (subunits alpha, epsilon and theta) contains the polymerase and the 3'-5' exonuclease proofreading activities. The polymerase is tethered to the template via the dimeric beta sliding clamp processivity factor. The DNA clamp-loading complex assembles the beta sliding clamp onto the primed template and plays a central role in the organization and communication at the replication fork.

The catalysed reaction is DNA(n) + a 2'-deoxyribonucleoside 5'-triphosphate = DNA(n+1) + diphosphate. In terms of biological role, part of the beta sliding clamp loading complex, which hydrolyzes ATP to load the beta clamp onto primed DNA to form the DNA replication pre-initiation complex. DNA polymerase III is a complex, multichain enzyme responsible for most of the replicative synthesis in bacteria. This DNA polymerase also exhibits 3'-5' exonuclease activity. The delta subunit is the wrench that will open the beta subunit dimer. The DNA clamp loading complex (tau(3),delta,delta') is thought to load beta dimers onto DNA by binding ATP which alters the complex's conformation so it can bind beta sliding clamp dimers and open them at one interface. Primed DNA is recognized, ATP is hydrolyzed releasing the clamp loading complex and closing the beta sliding clamp ring around the primed DNA. In Aquifex aeolicus (strain VF5), this protein is Probable DNA polymerase III subunit delta.